The following is a 284-amino-acid chain: ATP phosphoribosyltransferase (284 aa).

This sequence belongs to the ATP phosphoribosyltransferase family. Long subfamily. In terms of assembly, equilibrium between an active dimeric form, an inactive hexameric form and higher aggregates. Interconversion between the various forms is largely reversible and is influenced by the natural substrates and inhibitors of the enzyme. Requires Mg(2+) as cofactor.

The protein localises to the cytoplasm. It carries out the reaction 1-(5-phospho-beta-D-ribosyl)-ATP + diphosphate = 5-phospho-alpha-D-ribose 1-diphosphate + ATP. Its pathway is amino-acid biosynthesis; L-histidine biosynthesis; L-histidine from 5-phospho-alpha-D-ribose 1-diphosphate: step 1/9. Feedback inhibited by histidine. In terms of biological role, catalyzes the condensation of ATP and 5-phosphoribose 1-diphosphate to form N'-(5'-phosphoribosyl)-ATP (PR-ATP). Has a crucial role in the pathway because the rate of histidine biosynthesis seems to be controlled primarily by regulation of HisG enzymatic activity. The chain is ATP phosphoribosyltransferase from Mycobacterium avium (strain 104).